The following is a 383-amino-acid chain: Serpin B5 (383 aa).

N-linked (GlcNAc...) asparagine glycans are attached at residues N106, N133, N176, and N361.

It belongs to the serpin family. Ov-serpin subfamily.

The protein resides in the secreted. Its subcellular location is the extracellular space. In terms of biological role, may not exhibit serine protease inhibitory activity. In Xenopus laevis (African clawed frog), this protein is Serpin B5 (serpinb5).